Consider the following 987-residue polypeptide: Kinesin-like protein KIN-14G (987 aa).

The region spanning 44-163 (SLRRYEAAGW…CILALKSYSE (120 aa)) is the Calponin-homology (CH) domain. The tract at residues 201 to 221 (ISRTQSTDMLSTDQPLSSDGD) is disordered. In terms of domain architecture, Kinesin motor spans 394–721 (NIRVYCRVRP…LKFAERVGSV (328 aa)). Residue 478–485 (GQTGSGKT) coordinates ATP. A coiled-coil region spans residues 725 to 754 (AARVNKDNSEVKELKEQIANLKMALVRKGN). Disordered stretches follow at residues 759-849 (QPTA…ESKS) and 927-987 (NIQN…SLGT). A compositionally biased stretch (polar residues) spans 788–797 (MGNTSNNSRP). The span at 840–849 (GKDEDRESKS) shows a compositional bias: basic and acidic residues. Residues 964–974 (PPNTVNSQPQR) show a composition bias toward polar residues.

Belongs to the TRAFAC class myosin-kinesin ATPase superfamily. Kinesin family. KIN-14 subfamily. As to quaternary structure, monomer. Flower specific.

Its subcellular location is the cytoplasm. It localises to the cytoskeleton. Its function is as follows. Microtubule-binding motor protein. The sequence is that of Kinesin-like protein KIN-14G from Arabidopsis thaliana (Mouse-ear cress).